The sequence spans 391 residues: Serpin-ZX (391 aa).

Positions 337–361 (GTEAAAASAGVIKLRGLLMEEDEID) are RCL. Asn-375 carries an N-linked (GlcNAc...) asparagine glycan.

It belongs to the serpin family. Interacts with RD21A. Expressed in root tips. Expressed in siliques (at protein level).

The protein resides in the secreted. Its subcellular location is the extracellular space. It localises to the apoplast. It is found in the cytoplasm. In terms of biological role, inhibits metacaspase-9 (MC9) cysteine protease. Functions through cleavage of its reactive center loop and covalent binding to MC9. Involved in the control of elicitor-stimulated programmed cell death (PCD). During infection by the necrotrophic fungal pathogen Botrytis cinerea, functions to protect cells by limiting the PCD-promoting protease RD21A activity that is released from the ER body or vacuole to the cytoplasm. Involved in the control of water stress-induced cell death by limiting the pro-death protease RD21A activity that is released from the vacuole to the cytoplasm. The chain is Serpin-ZX from Arabidopsis thaliana (Mouse-ear cress).